The sequence spans 161 residues: Nucleotide-binding protein BceJ2315_27070 (161 aa).

Belongs to the YajQ family.

Functionally, nucleotide-binding protein. The sequence is that of Nucleotide-binding protein BceJ2315_27070 from Burkholderia cenocepacia (strain ATCC BAA-245 / DSM 16553 / LMG 16656 / NCTC 13227 / J2315 / CF5610) (Burkholderia cepacia (strain J2315)).